Here is a 456-residue protein sequence, read N- to C-terminus: FAD-dependent monooxygenase sor5 (456 aa).

The helical transmembrane segment at 18 to 38 threads the bilayer; sequence PLEVAIVGGGLTGLALALGLL. Residue Asn-43 is glycosylated (N-linked (GlcNAc...) asparagine). Positions 48 and 119 each coordinate FAD. Arg-200 is an active-site residue. Residues Asp-331 and Ala-344 each contribute to the FAD site.

The protein belongs to the paxM FAD-dependent monooxygenase family. FAD serves as cofactor.

The protein localises to the membrane. Its pathway is secondary metabolite biosynthesis. Functionally, FAD-dependent monooxygenase; part of the SOR gene cluster that mediates the biosynthesis of sorbicillinoids, a diverse group of yellow secondary metabolites that restrict growth of competing pathogenic fungi but not of bacteria. Sorbicillinoids biosynthesis requires the action of two PKSs. The SOR cluster is required for the production of trichodimerol and dihydrotrichotetronin, with sor2 being sufficient for production of trichodimerol, but not dihydrotrichotetronin in the light. Sor1 iteratively combines three acetyl units and the growing chain is modified by the ketoacyl reductase subunit, and optional by the enoyl reductase subunit in the second cycle. The polyketide is then handed over to the PKS sor2, which adds three more acetyl units, and two methyl groups. Sor2 releases an aldehyde, which undergoes spontaneous cyclization resulting in the formation of sorbicillin or 2',3'-dihydrosorbicillin. The monooxygenase sor5 oxidizes sorbicillin and 2',3'-dihydrosorbicillin to 2',3'-dihydrosorbicillinol and sorbicillinol, respectively. The oxidoreductase sor8 further converts sorbicillinol into oxosorbicillinol. Sorbicillinol is the building block for the other sorbicillinoids such as disorbicillinol, bisvertinolon, dihydrobisvertinolone, and dihydrotrichotetronine. This chain is FAD-dependent monooxygenase sor5, found in Hypocrea jecorina (strain QM6a) (Trichoderma reesei).